We begin with the raw amino-acid sequence, 552 residues long: Leucine-rich repeat-containing protein 31 (552 aa).

The disordered stretch occupies residues 1–65 (MSQTRKKTSS…SETAKPLSSE (65 aa)). Residues 31 to 41 (ESRKEDNDLKT) are compositionally biased toward basic and acidic residues. Positions 42–58 (SDSQPSDWIQKTATSET) are enriched in polar residues. 9 LRR repeats span residues 227–246 (SLEVLDLSINRDIVGSLNSI), 255–275 (NLKVLKLHSCGLSQKSVKILD), 283–293 (ELRKLDLSCNK), 311–331 (HLQVLDLHQCSLTADDVMSLT), 339–360 (NLQELDLSANKKMGSSSENLLS), 367–387 (ALKSLVINNCALESETFTALA), 395–415 (ALEVFNLSWNKCVGGNLKLLL), 423–443 (SLQVLRLSSCSLVTEDVALLA), and 453–475 (KLQKLDLSYNDSICDAGWTMFCQ).

The sequence is that of Leucine-rich repeat-containing protein 31 (LRRC31) from Homo sapiens (Human).